A 378-amino-acid chain; its full sequence is Ribosomal RNA large subunit methyltransferase G (378 aa).

This sequence belongs to the methyltransferase superfamily. RlmG family.

The protein resides in the cytoplasm. The catalysed reaction is guanosine(1835) in 23S rRNA + S-adenosyl-L-methionine = N(2)-methylguanosine(1835) in 23S rRNA + S-adenosyl-L-homocysteine + H(+). Its function is as follows. Specifically methylates the guanine in position 1835 (m2G1835) of 23S rRNA. This Shigella flexneri serotype 5b (strain 8401) protein is Ribosomal RNA large subunit methyltransferase G.